The sequence spans 430 residues: Enolase (430 aa).

Residue Gln167 participates in (2R)-2-phosphoglycerate binding. The active-site Proton donor is Glu209. The Mg(2+) site is built by Asp246, Glu287, and Asp314. (2R)-2-phosphoglycerate contacts are provided by Lys339, Arg368, Ser369, and Lys390. Lys339 (proton acceptor) is an active-site residue.

This sequence belongs to the enolase family. Mg(2+) serves as cofactor.

The protein localises to the cytoplasm. It is found in the secreted. Its subcellular location is the cell surface. The catalysed reaction is (2R)-2-phosphoglycerate = phosphoenolpyruvate + H2O. It participates in carbohydrate degradation; glycolysis; pyruvate from D-glyceraldehyde 3-phosphate: step 4/5. Its function is as follows. Catalyzes the reversible conversion of 2-phosphoglycerate (2-PG) into phosphoenolpyruvate (PEP). It is essential for the degradation of carbohydrates via glycolysis. The sequence is that of Enolase from Prochlorococcus marinus subsp. pastoris (strain CCMP1986 / NIES-2087 / MED4).